The primary structure comprises 268 residues: TATA-box-binding protein (268 aa).

A compositionally biased stretch (polar residues) spans 1–24; that stretch reads MDSLTTHPATAQQARAFTSPSSLS. Residues 1–86 form a disordered region; that stretch reads MDSLTTHPAT…TPAATPGASA (86 aa). Residues 50-86 are compositionally biased toward low complexity; the sequence is NGQSANGNVNGQQQGANAANGNGVMPATPAATPGASA. Tandem repeats lie at residues 95 to 171 and 185 to 262.

This sequence belongs to the TBP family. As to quaternary structure, belongs to the TFIID complex together with the TBP-associated factors (TAFs). Binds DNA as monomer.

It localises to the nucleus. General transcription factor that functions at the core of the DNA-binding multiprotein factor TFIID. Binding of TFIID to the TATA box is the initial transcriptional step of the pre-initiation complex (PIC), playing a role in the activation of eukaryotic genes transcribed by RNA polymerase II. The protein is TATA-box-binding protein (tbpA) of Emericella nidulans (strain FGSC A4 / ATCC 38163 / CBS 112.46 / NRRL 194 / M139) (Aspergillus nidulans).